A 296-amino-acid polypeptide reads, in one-letter code: Large ribosomal subunit protein uL15m (296 aa).

The transit peptide at Met1–Arg20 directs the protein to the mitochondrion. Positions Asn25–Arg59 are disordered.

It belongs to the universal ribosomal protein uL15 family. As to quaternary structure, component of the mitochondrial ribosome large subunit (39S) which comprises a 16S rRNA and about 50 distinct proteins.

Its subcellular location is the mitochondrion. The protein is Large ribosomal subunit protein uL15m (mrpl15) of Danio rerio (Zebrafish).